The chain runs to 76 residues: uncharacterized protein (76 aa).

This is an uncharacterized protein from Sulfolobus islandicus rod-shaped virus 1 (SIRV-1).